A 143-amino-acid polypeptide reads, in one-letter code: Small ribosomal subunit protein uS11c (143 aa).

This sequence belongs to the universal ribosomal protein uS11 family. Part of the 30S ribosomal subunit.

It is found in the plastid. It localises to the chloroplast. The protein is Small ribosomal subunit protein uS11c of Saccharum officinarum (Sugarcane).